The chain runs to 3567 residues: Zinc finger homeobox protein 4 (3567 aa).

N-acetylmethionine is present on M1. Disordered regions lie at residues 1-54, 425-480, 522-545, and 565-611; these read METC…LKTD, LSHS…AYSN, TSSSSATVSDDTEKKKQTAAVRAS, and SKDS…SPGS. Over residues 9 to 28 the composition is skewed to polar residues; sequence ISRQENGQSTSKLCGTTQLD. 2 stretches are compositionally biased toward basic and acidic residues: residues 39–54 and 434–452; these read EPDRENSSTDDNLKTD and KMSESKDQENNCERPKESN. The segment covering 468–480 has biased composition (acidic residues); it reads EPGDEDEEDAYSN. C2H2-type zinc fingers lie at residues 613 to 636, 644 to 667, and 699 to 723; these read IECPKCDTVLGSSRSLGGHMTMMH, LKCPKCNWHYKYQQTLEAHMKEKH, and FRCEVCNYSTTTKGNLSIHMQSDKH. The segment at 767-789 adopts a C2H2-type 4; degenerate zinc-finger fold; sequence WRCEVCDYETNVARNLRIHMTSE. 3 consecutive C2H2-type zinc fingers follow at residues 917–941, 973–995, and 1021–1045; these read YQCKLCNYNTQLKANFQLHCKTDKH, LKCNACDYYTNSVDKLRLHTTNH, and YYCAVCDYTTKVKLNLVQHVRSVKH. The segment at 1098–1160 is disordered; that stretch reads EQHEEAEGAI…EDVATKRSKP (63 aa). Basic and acidic residues-rich tracts occupy residues 1120–1132 and 1148–1160; these read TSERDNSEGKNSN and AKEEDVATKRSKP. A Glycyl lysine isopeptide (Lys-Gly) (interchain with G-Cter in SUMO2) cross-link involves residue K1149. 2 C2H2-type zinc fingers span residues 1172 to 1195 and 1201 to 1224; these read YQCPYCNYNSRDQSRIQMHVLSQH and ICCPLCQDVLSNKMHLQLHLTHLH. The interval 1254–1324 is disordered; the sequence is AASEKSERDT…WNKNSSKDVK (71 aa). Positions 1281 to 1310 are enriched in basic and acidic residues; that stretch reads MDDKSMAGLEDSKANVEVKNEEQKPTKEPL. Residues K1299 and K1324 each participate in a glycyl lysine isopeptide (Lys-Gly) (interchain with G-Cter in SUMO2) cross-link. 2 consecutive C2H2-type zinc fingers follow at residues 1352–1374 and 1380–1403; these read YRCNHCSLAFKTMQKLQIHSQYH and TMCNLCQRSFRTFQALKKHLEAGH. The interval 1429–1480 is disordered; the sequence is ETMSQDDHGLEQEMEREYEVDHEGKASPVGSDSSSIPDDMGSEPKRTLPFRK. The segment covering 1433–1453 has biased composition (basic and acidic residues); it reads QDDHGLEQEMEREYEVDHEGK. Residues 1496 to 1522 form a C2H2-type 12 zinc finger; sequence YKCTVCKESFTQKNILLVHYNSVSHLH. K1546 participates in a covalent cross-link: Glycyl lysine isopeptide (Lys-Gly) (interchain with G-Cter in SUMO2). The C2H2-type 13 zinc-finger motif lies at 1548–1572; it reads YKCSICNVAYSQSSTLEIHMRSVLH. 2 stretches are compositionally biased toward low complexity: residues 1761 to 1772 and 1779 to 1791; these read TQPQLQPQKQQQ and QQQQQQASKLLKQ. Disordered regions lie at residues 1761 to 1791 and 1809 to 1858; these read TQPQLQPQKQQQQPPPPQQQQQQQASKLLKQ and SYKE…IASG. K1790 is covalently cross-linked (Glycyl lysine isopeptide (Lys-Gly) (interchain with G-Cter in SUMO2)). The segment covering 1809 to 1845 has biased composition (basic and acidic residues); sequence SYKEAEDISEKPEKPKQEFISEGEGLKEGKDTKKQKS. The C2H2-type 14 zinc finger occupies 1901–1924; it reads LECGTCGKLFSNVLILKSHQEHVH. The segment at 1948 to 2024 is disordered; the sequence is YPISPSSPET…PPSAPPQVQL (77 aa). Pro residues-rich tracts occupy residues 1955–1974 and 1991–2019; these read PETPPPPPPPPPLPPAPPQP and QAPPPTPPPPPPPPPPPPPPPPPPPPSAP. 2 consecutive DNA-binding regions (homeobox) follow at residues 2084-2143 and 2181-2240; these read FKRP…RQRN and KRSS…RKSY. Residues 2267 to 2291 form a C2H2-type 15; degenerate zinc finger; the sequence is YQCKKCNVVFPRIFDLITHQKKQCY. Disordered stretches follow at residues 2289 to 2311 and 2328 to 2431; these read QCYKDEDDDAQDESQTEDSMDAT and AKNA…SPLQ. The segment covering 2293–2309 has biased composition (acidic residues); the sequence is DEDDDAQDESQTEDSMD. A compositionally biased stretch (low complexity) spans 2331–2345; that stretch reads AAAPAASSGSGTSTP. Basic and acidic residues predominate over residues 2352-2370; it reads PEPEKTSPKPEYPAEKPKQ. A compositionally biased stretch (polar residues) spans 2419–2431; that stretch reads SASQTPVPSSPLQ. A C2H2-type 16 zinc finger spans residues 2448–2470; that stretch reads YQCDQCTVAFPTLELWQEHQHMH. Polar residues predominate over residues 2507–2530; sequence LGSSLTQMPPQASSSHTTAPTTVA. Residues 2507-2564 form a disordered region; sequence LGSSLTQMPPQASSSHTTAPTTVAASLKRKLDDKEDNNCSEKEGGNSGEDQHRDKRLR. Over residues 2535-2559 the composition is skewed to basic and acidic residues; that stretch reads RKLDDKEDNNCSEKEGGNSGEDQHR. Residues 2560–2619 constitute a DNA-binding region (homeobox 3); it reads DKRLRTTITPEQLEILYEKYLLDSNPTRKMLDHIAREVGLKKRVVQVWFQNTRARERKGQ. The C2H2-type 17 zinc finger occupies 2630-2653; sequence KRCPFCRALFKAKSALESHIRSRH. S2663 is subject to Phosphoserine. The segment covering 2764–2785 has biased composition (polar residues); the sequence is AISDATTGDEGNTEMESTTGSS. 2 disordered regions span residues 2764-2811 and 2829-2885; these read AISD…TTPT and HFND…PGHK. Basic and acidic residues predominate over residues 2830–2839; it reads FNDKDGDHDQ. Positions 2862 to 2874 are enriched in low complexity; that stretch reads PSSPNPFGSSNPF. The homeobox 4 DNA-binding region spans 2884–2943; the sequence is HKRFRTQMSNLQLKVLKACFSDYRTPTMQECEMLGNEIGLPKRVVQVWFQNARAKEKKFK. The C2H2-type 18 zinc-finger motif lies at 2962-2986; the sequence is PECTLCGVKYSARLSIRDHIFSKQH. Low complexity predominate over residues 3092–3110; it reads SATSSPALSLSSAPTKPLL. 2 disordered regions span residues 3092 to 3172 and 3281 to 3337; these read SATS…KEEK and LQKQ…LESK. Positions 3111-3125 are enriched in pro residues; it reads QTPPPPPPPPPPPPS. Polar residues predominate over residues 3126–3135; the sequence is SSLSGQQTEQ. The span at 3153 to 3172 shows a compositional bias: basic and acidic residues; the sequence is IKEEELEATKPEKHPKKEEK. K3154 participates in a covalent cross-link: Glycyl lysine isopeptide (Lys-Gly) (interchain with G-Cter in SUMO2). Positions 3265–3294 form a coiled coil; that stretch reads ALLQQYQQYQQNLQESLQKQQKQQQEQQQK. Residues 3281–3293 are compositionally biased toward low complexity; sequence LQKQQKQQQEQQQ. Positions 3294 to 3314 are enriched in polar residues; it reads KPVQAKTSKVESDQPQNSNDA. Residues 3315–3337 are compositionally biased toward basic and acidic residues; that stretch reads SETKEDKSTATESTKEEPQLESK. The C2H2-type 19; degenerate zinc finger occupies 3354-3378; the sequence is FICRKCQMMFTDEDAAVNHQKSFCY. A C2H2-type 20 zinc finger spans residues 3398-3422; that stretch reads YQCLACDVAISGNEALSQHLQSSLH. Disordered stretches follow at residues 3443–3462 and 3511–3534; these read HSVCSPNPNTTSTSQSAASS and STSGVQTSLPTESCSDESDSELSQ. Positions 3447–3462 are enriched in low complexity; it reads SPNPNTTSTSQSAASS.

It belongs to the krueppel C2H2-type zinc-finger protein family. Expressed in brain, skeletal muscle and liver. Very low expression in stomach.

It localises to the nucleus. Its function is as follows. May play a role in neural and muscle differentiation. May be involved in transcriptional regulation. This is Zinc finger homeobox protein 4 (ZFHX4) from Homo sapiens (Human).